We begin with the raw amino-acid sequence, 337 residues long: Heat-inducible transcription repressor HrcA (337 aa).

This sequence belongs to the HrcA family.

Its function is as follows. Negative regulator of class I heat shock genes (grpE-dnaK-dnaJ and groELS operons). Prevents heat-shock induction of these operons. The polypeptide is Heat-inducible transcription repressor HrcA (Polaromonas naphthalenivorans (strain CJ2)).